The sequence spans 113 residues: MDTTIDDLATKQCKPCEGAMPPLSQEEITQLMRQLDGWNYLGKTIRKEFSFKNYYQTMAFVNAVAWISHREDHHPDITVGYNKCQVEYTTHAIGGLSENDFICAAKIDTLFQI.

It belongs to the pterin-4-alpha-carbinolamine dehydratase family.

The catalysed reaction is (4aS,6R)-4a-hydroxy-L-erythro-5,6,7,8-tetrahydrobiopterin = (6R)-L-erythro-6,7-dihydrobiopterin + H2O. The polypeptide is Putative pterin-4-alpha-carbinolamine dehydratase (Nitrosospira multiformis (strain ATCC 25196 / NCIMB 11849 / C 71)).